A 501-amino-acid polypeptide reads, in one-letter code: Envelope glycoprotein C homolog (501 aa).

Positions 1-27 are cleaved as a signal peptide; it reads MLTPRVLRALGWTGLFFLLLSPSNVLG. Topologically, residues 28 to 465 are virion surface; it reads ASLSRDLETP…DATPAARGTP (438 aa). A glycan (N-linked (GlcNAc...) asparagine; by host) is linked at Asn46. Positions 53 to 86 are disordered; sequence PLTEVPHAPSTESVSTNSESTNEHTITETTGKNA. Positions 62–72 are enriched in low complexity; that stretch reads STESVSTNSES. Asn91, Asn100, Asn120, Asn212, Asn354, Asn400, and Asn429 each carry an N-linked (GlcNAc...) asparagine; by host glycan. One can recognise an Ig-like domain in the interval 258–356; the sequence is PASVDVLAPP…GDMISTTNAT (99 aa). The helical transmembrane segment at 466–492 threads the bilayer; it reads MVITVTAVLGLAVILGMGIIMTALCLY. The Cytoplasmic segment spans residues 493–501; the sequence is NSTRKNIRL.

It belongs to the herpesviridae glycoprotein C family.

It localises to the secreted. The protein localises to the host cell membrane. Its function is as follows. May play an immunoevasive role in the pathogenesis of Marek's disease. It is a candidate for causing the early-stage immunosuppression that occurs after MDHV infection. This is Envelope glycoprotein C homolog (gC) from Gallus gallus (Chicken).